A 704-amino-acid polypeptide reads, in one-letter code: Ion-translocating oxidoreductase complex subunit C (704 aa).

4Fe-4S ferredoxin-type domains are found at residues 368-397 (MGAP…QQLY) and 407-436 (KATA…VQYF). Residues cysteine 377, cysteine 380, cysteine 383, cysteine 387, cysteine 416, cysteine 419, cysteine 422, and cysteine 426 each coordinate [4Fe-4S] cluster. Residues 536-685 (RAKQAAHPMA…ADPRKAAVAA (150 aa)) form a disordered region. Low complexity predominate over residues 556-565 (KAAVEAAIAR).

Belongs to the 4Fe4S bacterial-type ferredoxin family. RnfC subfamily. The complex is composed of six subunits: RsxA, RsxB, RsxC, RsxD, RsxE and RsxG. [4Fe-4S] cluster serves as cofactor.

The protein localises to the cell inner membrane. Functionally, part of a membrane-bound complex that couples electron transfer with translocation of ions across the membrane. Required to maintain the reduced state of SoxR. This Salmonella dublin (strain CT_02021853) protein is Ion-translocating oxidoreductase complex subunit C.